We begin with the raw amino-acid sequence, 208 residues long: Large ribosomal subunit protein uL4 (208 aa).

A disordered region spans residues 45–95; the sequence is RQGTHKAKTRSEVRGGGKKPFRQKGTGNARQGSSRSPIHVGGGTIFGPQPH. A compositionally biased stretch (polar residues) spans 69–80; it reads GTGNARQGSSRS.

Belongs to the universal ribosomal protein uL4 family. As to quaternary structure, part of the 50S ribosomal subunit.

One of the primary rRNA binding proteins, this protein initially binds near the 5'-end of the 23S rRNA. It is important during the early stages of 50S assembly. It makes multiple contacts with different domains of the 23S rRNA in the assembled 50S subunit and ribosome. In terms of biological role, forms part of the polypeptide exit tunnel. The chain is Large ribosomal subunit protein uL4 from Chlorobium chlorochromatii (strain CaD3).